The chain runs to 77 residues: Acyl carrier protein (77 aa).

The Carrier domain maps to 1–76 (MDREQRIKEI…DVINYLNEKL (76 aa)). An O-(pantetheine 4'-phosphoryl)serine modification is found at serine 36.

The protein belongs to the acyl carrier protein (ACP) family. In terms of processing, 4'-phosphopantetheine is transferred from CoA to a specific serine of apo-ACP by AcpS. This modification is essential for activity because fatty acids are bound in thioester linkage to the sulfhydryl of the prosthetic group.

The protein resides in the cytoplasm. The protein operates within lipid metabolism; fatty acid biosynthesis. Carrier of the growing fatty acid chain in fatty acid biosynthesis. This Hydrogenobaculum sp. (strain Y04AAS1) protein is Acyl carrier protein.